A 287-amino-acid polypeptide reads, in one-letter code: Proteasome subunit alpha (287 aa).

A disordered region spans residues 241-287 (GVVAGEEPHTAAHAPSVPQPGAPAGLGDPGAPDTGGTAGSGGEAPTT). Residues 262-275 (APAGLGDPGAPDTG) are compositionally biased toward low complexity. Over residues 276–287 (GTAGSGGEAPTT) the composition is skewed to gly residues.

The protein belongs to the peptidase T1A family. As to quaternary structure, the 20S proteasome core is composed of 14 alpha and 14 beta subunits that assemble into four stacked heptameric rings, resulting in a barrel-shaped structure. The two inner rings, each composed of seven catalytic beta subunits, are sandwiched by two outer rings, each composed of seven alpha subunits. The catalytic chamber with the active sites is on the inside of the barrel. Has a gated structure, the ends of the cylinder being occluded by the N-termini of the alpha-subunits. Is capped by the proteasome-associated ATPase, ARC.

The protein resides in the cytoplasm. It functions in the pathway protein degradation; proteasomal Pup-dependent pathway. The formation of the proteasomal ATPase ARC-20S proteasome complex, likely via the docking of the C-termini of ARC into the intersubunit pockets in the alpha-rings, may trigger opening of the gate for substrate entry. Interconversion between the open-gate and close-gate conformations leads to a dynamic regulation of the 20S proteasome proteolysis activity. In terms of biological role, component of the proteasome core, a large protease complex with broad specificity involved in protein degradation. The polypeptide is Proteasome subunit alpha (Geodermatophilus obscurus (strain ATCC 25078 / DSM 43160 / JCM 3152 / CCUG 61914 / KCC A-0152 / KCTC 9177 / NBRC 13315 / NRRL B-3577 / G-20)).